Here is a 346-residue protein sequence, read N- to C-terminus: Annexin A1 (346 aa).

The residue at position 2 (Ala2) is an N-acetylalanine. The residue at position 5 (Ser5) is a Phosphoserine; by TRPM7. Residue Gln19 forms an Isoglutamyl lysine isopeptide (Gln-Lys) (interchain with K-?) linkage. Residue Tyr21 is modified to Phosphotyrosine; by EGFR. The tract at residues 25-47 (VKGSKGGPGSAVSPYPTFNPSSD) is disordered. A phosphoserine mark is found at Ser34 and Ser37. Residue Thr41 is modified to Phosphothreonine. Annexin repeat units lie at residues 42–113 (FNPS…ALLK), 114–185 (TPAQ…SLAK), 197–269 (DLAD…VVVK), and 273–344 (SKPM…ALCG). Lys58 bears the N6-acetyllysine mark. Ca(2+) is bound by residues Gly59, Val60, Glu62, Lys97, Leu100, Glu105, Met127, Gly129, Gly131, Thr132, and Glu134. Thr136 carries the post-translational modification Phosphothreonine. 3 residues coordinate Ca(2+): Asp171, Gly210, and Arg213. Residue Lys214 forms a Glycyl lysine isopeptide (Lys-Gly) (interchain with G-Cter in SUMO1); alternate linkage. A Glycyl lysine isopeptide (Lys-Gly) (interchain with G-Cter in SUMO2); alternate cross-link involves residue Lys214. Gly215 is a Ca(2+) binding site. Lys239 bears the N6-acetyllysine mark. Ca(2+) contacts are provided by Asp253, Glu255, and Leu256. Lys257 is covalently cross-linked (Glycyl lysine isopeptide (Lys-Gly) (interchain with G-Cter in SUMO1)). Ca(2+)-binding residues include Glu261, Met286, Gly288, and Gly290. Position 312 is an N6-acetyllysine (Lys312). Cysteines 324 and 343 form a disulfide. 3 residues coordinate Ca(2+): Leu328, Glu330, and Thr331. Residue Lys332 forms a Glycyl lysine isopeptide (Lys-Gly) (interchain with G-Cter in SUMO1) linkage. Glu336 serves as a coordination point for Ca(2+).

Belongs to the annexin family. As to quaternary structure, homodimer; non-covalently linked. Homodimer; linked by transglutamylation. Homodimers linked by transglutamylation are observed in placenta, but not in other tissues. Interacts with S100A11. Heterotetramer, formed by two molecules each of S100A11 and ANXA1. Interacts with DYSF. Interacts with EGFR. In terms of processing, phosphorylated by EGFR. Phosphorylated by protein kinase C and TRPM7. Phosphorylated in response to EGF treatment. Post-translationally, sumoylated. Proteolytically cleaved by cathepsin CTSG to release the active N-terminal peptide Ac2-26. Detected in lung and spleen (at protein level).

Its subcellular location is the nucleus. The protein resides in the cytoplasm. It is found in the cell projection. It localises to the cilium. The protein localises to the basolateral cell membrane. Its subcellular location is the lateral cell membrane. The protein resides in the early endosome. It is found in the cell membrane. It localises to the cytoplasmic vesicle membrane. The protein localises to the apical cell membrane. Its subcellular location is the membrane. The protein resides in the endosome. It is found in the secreted. It localises to the extracellular space. The protein localises to the extracellular exosome. Its subcellular location is the cytoplasmic vesicle. The protein resides in the secretory vesicle lumen. It is found in the phagocytic cup. In terms of biological role, plays important roles in the innate immune response as effector of glucocorticoid-mediated responses and regulator of the inflammatory process. Has anti-inflammatory activity. Plays a role in glucocorticoid-mediated down-regulation of the early phase of the inflammatory response. Contributes to the adaptive immune response by enhancing signaling cascades that are triggered by T-cell activation, regulates differentiation and proliferation of activated T-cells. Promotes the differentiation of T-cells into Th1 cells and negatively regulates differentiation into Th2 cells. Has no effect on unstimulated T-cells. Negatively regulates hormone exocytosis via activation of the formyl peptide receptors and reorganization of the actin cytoskeleton. Has high affinity for Ca(2+) and can bind up to eight Ca(2+) ions. Displays Ca(2+)-dependent binding to phospholipid membranes. Plays a role in the formation of phagocytic cups and phagosomes. Plays a role in phagocytosis by mediating the Ca(2+)-dependent interaction between phagosomes and the actin cytoskeleton. Functions at least in part by activating the formyl peptide receptors and downstream signaling cascades. Promotes chemotaxis of granulocytes and monocytes via activation of the formyl peptide receptors. Promotes rearrangement of the actin cytoskeleton, cell polarization and cell migration. Promotes resolution of inflammation and wound healing. Acts via neutrophil N-formyl peptide receptors to enhance the release of CXCL2. This is Annexin A1 (ANXA1) from Sus scrofa (Pig).